We begin with the raw amino-acid sequence, 31 residues long: Protamine CIII (31 aa).

Residues 1 to 31 (MPRRRRASRPVRRRRRPRVSRRRRRGGRRRR) form a disordered region.

In terms of tissue distribution, testis.

The protein localises to the nucleus. Its subcellular location is the chromosome. Functionally, protamines substitute for histones in the chromatin of sperm during the haploid phase of spermatogenesis. They compact sperm DNA into a highly condensed, stable and inactive complex. The chain is Protamine CIII from Oncorhynchus mykiss (Rainbow trout).